Here is a 99-residue protein sequence, read N- to C-terminus: Integration host factor subunit alpha (99 aa).

The interval 52–73 is disordered; sequence FGNFTLRDKPQRPGRNPKTGEE.

It belongs to the bacterial histone-like protein family. Heterodimer of an alpha and a beta chain.

In terms of biological role, this protein is one of the two subunits of integration host factor, a specific DNA-binding protein that functions in genetic recombination as well as in transcriptional and translational control. The sequence is that of Integration host factor subunit alpha from Legionella pneumophila subsp. pneumophila (strain Philadelphia 1 / ATCC 33152 / DSM 7513).